Reading from the N-terminus, the 616-residue chain is Leucine aminopeptidase (616 aa).

Residues 128 to 130 and 282 to 286 each bind substrate; these read QCQ and GGMEN. Residue histidine 309 participates in Zn(2+) binding. Glutamate 310 acts as the Proton acceptor in catalysis. Histidine 313 and glutamate 332 together coordinate Zn(2+). Residue tyrosine 397 is the Proton donor of the active site. Residue 566–568 coordinates substrate; that stretch reads RMK.

The protein belongs to the peptidase M1 family. Zn(2+) is required as a cofactor.

It is found in the cytoplasm. It catalyses the reaction an epoxide + H2O = an ethanediol. Its function is as follows. Aminopeptidase that preferentially cleaves di- and tripeptides. Also has low epoxide hydrolase activity (in vitro). Can hydrolyze the epoxide leukotriene LTA(4) but it forms preferentially 5,6-dihydroxy-7,9,11,14-eicosatetraenoic acid rather than the cytokine leukotriene B(4) as the product compared to the homologous mammalian enzyme (in vitro). The polypeptide is Leucine aminopeptidase (LKHA4) (Arabidopsis thaliana (Mouse-ear cress)).